We begin with the raw amino-acid sequence, 582 residues long: Putative transcriptional regulator HVO_1357 (582 aa).

The Response regulatory domain occupies 19–129 (VVLVVDDDED…EVKETVEELL (111 aa)). D67 is modified (4-aspartylphosphate). Residues 165–203 (LSDLRSRLEAVRAEHEAAIRNREAQLDRLNRTNELLRDV) are a coiled coil. The region spanning 517–569 (LTDRQRTVLETSLVSGYFEWPRGSTAEEVADSLGISPPTLHEHLRTAERKLIE) is the HTH bat-type domain.

In terms of biological role, may be part of a signal-dependent gene regulation cascade that is relevant to swimming motility. May be involved in the transcription regulation of target genes. This is Putative transcriptional regulator HVO_1357 from Haloferax volcanii (strain ATCC 29605 / DSM 3757 / JCM 8879 / NBRC 14742 / NCIMB 2012 / VKM B-1768 / DS2) (Halobacterium volcanii).